We begin with the raw amino-acid sequence, 352 residues long: C-X-C chemokine receptor type 4 (352 aa).

The interval 1–21 (MEGISIYTSDNYTEEMGSGDY) is important for chemokine binding and signaling. The Extracellular portion of the chain corresponds to 1–38 (MEGISIYTSDNYTEEMGSGDYDSMKEPCFREENANFNK). The residue at position 7 (Y7) is a Sulfotyrosine. Residue N11 is glycosylated (N-linked (GlcNAc...) asparagine). Y12 bears the Sulfotyrosine mark. S18 carries an O-linked (Xyl...) (chondroitin sulfate) serine glycan. At Y21 the chain carries Sulfotyrosine. 2 disulfide bridges follow: C28–C274 and C109–C186. A helical transmembrane segment spans residues 39-63 (IFLPTIYSIIFLTGIVGNGLVILVM). At 64 to 77 (GYQKKLRSMTDKYR) the chain is on the cytoplasmic side. The chain crosses the membrane as a helical span at residues 78-99 (LHLSVADLLFVITLPFWAVDAV). The chemokine binding stretch occupies residues 94-97 (WAVD). At 100–110 (ANWYFGNFLCK) the chain is on the extracellular side. Residues 111–130 (AVHVIYTVNLYSSVLILAFI) traverse the membrane as a helical segment. Residues 113–117 (HVIYT) are chemokine binding. Topologically, residues 131 to 154 (SLDRYLAIVHATNSQRPRKLLAEK) are cytoplasmic. Positions 133 to 135 (DRY) match the Important for signaling motif. Residues 135-147 (YLAIVHATNSQRP) are involved in dimerization; when bound to chemokine. Residues 155-174 (VVYVGVWIPALLLTIPDFIF) traverse the membrane as a helical segment. Residues 175-195 (ANVSEADDRYICDRFYPNDLW) lie on the Extracellular side of the membrane. Positions 186–190 (CDRFY) are chemokine binding, important for signaling. Residues 191–210 (PNDLWVVVFQFQHIMVGLIL) form an involved in dimerization region. Residues 196–216 (VVVFQFQHIMVGLILPGIVIL) traverse the membrane as a helical segment. Topologically, residues 217-241 (SCYCIIISKLSHSKGHQKRKALKTT) are cytoplasmic. The chain crosses the membrane as a helical span at residues 242–261 (VILILAFFACWLPYYIGISI). The Extracellular portion of the chain corresponds to 262–282 (DSFILLEIIKQGCEFENTVHK). The involved in dimerization stretch occupies residues 266-268 (LLE). The chain crosses the membrane as a helical span at residues 283-302 (WISITEALAFFHCCLNPILY). Residues 303–352 (AFLGAKFKTSAQHALTSVSRGSSLKILSKGKRGGHSSVSTESESSSFHSS) lie on the Cytoplasmic side of the membrane. Phosphoserine is present on residues S319 and S321. S324 and S325 each carry phosphoserine; by PKC and GRK6. Residues 329 to 352 (LSKGKRGGHSSVSTESESSSFHSS) are disordered. At S330 the chain carries Phosphoserine; by GRK6. A Glycyl lysine isopeptide (Lys-Gly) (interchain with G-Cter in ubiquitin) cross-link involves residue K331. A compositionally biased stretch (low complexity) spans 337 to 352 (HSSVSTESESSSFHSS). S339 carries the phosphoserine; by GRK6 modification. A phosphoserine mark is found at S348 and S351.

This sequence belongs to the G-protein coupled receptor 1 family. In terms of assembly, monomer. Can form homodimers. Interacts with CD164. Interacts with ARRB2; the interaction is dependent on the C-terminal phosphorylation of CXCR4 and allows activation of MAPK1 and MAPK3. Interacts with ARR3; the interaction is dependent on the C-terminal phosphorylation of CXCR4 and modulates calcium mobilization. Interacts with RNF113A; the interaction, enhanced by CXCL12, promotes CXCR4 ubiquitination and subsequent degradation. Interacts (via the cytoplasmic C-terminal) with ITCH (via the WW domains I and II); the interaction, enhanced by CXCL12, promotes CXCR4 ubiquitination and leads to its degradation. Interacts with extracellular ubiquitin. Interacts with DBN1; this interaction is enhanced by antigenic stimulation. Following LPS binding, may form a complex with GDF5, HSP90AA1 and HSPA8. Post-translationally, phosphorylated on agonist stimulation. Rapidly phosphorylated on serine and threonine residues in the C-terminal. Phosphorylation at Ser-324 and Ser-325 leads to recruitment of ITCH, ubiquitination and protein degradation. Ubiquitinated after ligand binding, leading to its degradation. Ubiquitinated by ITCH at the cell membrane on agonist stimulation. The ubiquitin-dependent mechanism, endosomal sorting complex required for transport (ESCRT), then targets CXCR4 for lysosomal degradation. This process is dependent also on prior Ser-/Thr-phosphorylation in the C-terminal of CXCR4. Also binding of ARRB1 to STAM negatively regulates CXCR4 sorting to lysosomes though modulating ubiquitination of SFR5S. In terms of processing, sulfation is required for efficient binding of CXCL12/SDF-1alpha and promotes its dimerization. Post-translationally, O- and N-glycosylated. N-glycosylation can mask coreceptor function. The O-glycosylation chondroitin sulfate attachment does not affect interaction with CXCL12/SDF-1alpha nor its coreceptor activity.

It is found in the cell membrane. It localises to the cell junction. The protein localises to the early endosome. The protein resides in the late endosome. Its subcellular location is the lysosome. Its function is as follows. Receptor for the C-X-C chemokine CXCL12/SDF-1 that transduces a signal by increasing intracellular calcium ion levels and enhancing MAPK1/MAPK3 activation. Involved in the AKT signaling cascade. Plays a role in regulation of cell migration, e.g. during wound healing. Acts as a receptor for extracellular ubiquitin; leading to enhanced intracellular calcium ions and reduced cellular cAMP levels. Binds bacterial lipopolysaccharide (LPS) et mediates LPS-induced inflammatory response, including TNF secretion by monocytes. Involved in hematopoiesis and in cardiac ventricular septum formation. Also plays an essential role in vascularization of the gastrointestinal tract, probably by regulating vascular branching and/or remodeling processes in endothelial cells. Involved in cerebellar development. In the CNS, could mediate hippocampal-neuron survival. The chain is C-X-C chemokine receptor type 4 (CXCR4) from Pan troglodytes (Chimpanzee).